Consider the following 359-residue polypeptide: Putative nucleotidyltransferase MAB21L1 (359 aa).

Residues 23–24 (RK) and 63–66 (YEGL) each bind a ribonucleoside 5'-triphosphate. Residues Glu-73 and Glu-75 each contribute to the Mg(2+) site. Residues Lys-248 and 252–255 (SLLK) contribute to the a ribonucleoside 5'-triphosphate site.

Belongs to the mab-21 family. As to quaternary structure, monomer. Homodecamer; composed of 2 back to back homopentamers. The protein may exist as monomer in solution and oiligomerizes upon ligand binding.

It localises to the nucleus. Its function is as follows. Putative nucleotidyltransferase required for several aspects of embryonic development including normal development of the eye. It is unclear whether it displays nucleotidyltransferase activity in vivo. Binds single-stranded RNA (ssRNA). This Xenopus laevis (African clawed frog) protein is Putative nucleotidyltransferase MAB21L1 (mab21l1).